The sequence spans 549 residues: Putative lipase ATG15 (549 aa).

At 1-19 (MKQDLYKESSPPPSTTKSK) the chain is on the cytoplasmic side. A helical; Signal-anchor for type II membrane protein transmembrane segment spans residues 20 to 42 (GLYVIVAALVTTAIYLLYSQGYS). The Lumenal portion of the chain corresponds to 43 to 549 (NTHGEKDMPS…SHTVTHVTMA (507 aa)). 2 N-linked (GlcNAc...) asparagine glycosylation sites follow: N204 and N315. The Charge relay system role is filled by S331. N448 carries N-linked (GlcNAc...) asparagine glycosylation. The disordered stretch occupies residues 474-510 (DDDDKDKKKKKKTSTSSSVVSKTKTSTSSTVATNTMP). Positions 487-504 (STSSSVVSKTKTSTSSTV) are enriched in low complexity.

The protein belongs to the AB hydrolase superfamily. Lipase family. In terms of assembly, binds to both phosphatidylinositol (PI) and phosphatidylinositol 3,5-bisphosphate (PIP2).

Its subcellular location is the endosome. It localises to the multivesicular body membrane. It is found in the prevacuolar compartment membrane. It catalyses the reaction a triacylglycerol + H2O = a diacylglycerol + a fatty acid + H(+). In terms of biological role, lipase which is essential for lysis of subvacuolar cytoplasm to vacuole targeted bodies and intravacuolar autophagic bodies. Involved in the lysis of intravacuolar multivesicular body (MVB) vesicles. The intravacuolar membrane disintegration by ATG15 is critical to life span extension. This Yarrowia lipolytica (strain CLIB 122 / E 150) (Yeast) protein is Putative lipase ATG15 (ATG15).